The primary structure comprises 185 residues: Protein LPA2 (185 aa).

The transit peptide at 1–46 (MALQIHSPCSFSTRPYHLFFTTRNPRFAIKCQNSQIESDTTEDPSR) directs the protein to the chloroplast. The interval 35 to 105 (QIESDTTEDP…VFMSEEGAAK (71 aa)) is disordered. Over residues 47-75 (SKNSSSSGVGFGSPASSSSPAKKLSAATS) the composition is skewed to low complexity. A compositionally biased stretch (basic and acidic residues) spans 83 to 92 (KREVNRRAPV). The next 2 membrane-spanning stretches (helical) occupy residues 115 to 135 (AFLL…IILA) and 152 to 172 (VYPV…AYGV).

It localises to the plastid. Its subcellular location is the chloroplast membrane. The sequence is that of Protein LPA2 from Arabidopsis thaliana (Mouse-ear cress).